Reading from the N-terminus, the 179-residue chain is MGILFTRIWRLFNHQEHKVIIVGLDNAGKTTILYQFSMNEVVHTSPTIGSNVEEIVINNTRFLMWDIGGQESLRSSWNTYYTNTEFVIVVVDSTDRERISVTREELYKMLAHEDLRKAGLLIFANKQDVKGCMTVAEISQFLKLTSIKDHQWHIQACCALTGEGLCQGLEWMMSRLKIR.

The N-myristoyl glycine moiety is linked to residue Gly2. GTP is bound by residues 23–30, 66–70, 125–128, and Ala159; these read GLDNAGKT, DIGGQ, and NKQD.

It belongs to the small GTPase superfamily. Arf family.

Lacks ADP-ribosylation enhancing activity. In Bos taurus (Bovine), this protein is ADP-ribosylation factor-like protein 5A (ARL5A).